The primary structure comprises 480 residues: ATP synthase subunit beta, chloroplastic (480 aa).

161 to 168 (GGAGVGKT) contributes to the ATP binding site.

It belongs to the ATPase alpha/beta chains family. As to quaternary structure, F-type ATPases have 2 components, CF(1) - the catalytic core - and CF(0) - the membrane proton channel. CF(1) has five subunits: alpha(3), beta(3), gamma(1), delta(1), epsilon(1). CF(0) has four main subunits: a(1), b(1), b'(1) and c(9-12).

It localises to the plastid. The protein resides in the chloroplast thylakoid membrane. It carries out the reaction ATP + H2O + 4 H(+)(in) = ADP + phosphate + 5 H(+)(out). In terms of biological role, produces ATP from ADP in the presence of a proton gradient across the membrane. The catalytic sites are hosted primarily by the beta subunits. In Tetradesmus obliquus (Green alga), this protein is ATP synthase subunit beta, chloroplastic.